We begin with the raw amino-acid sequence, 197 residues long: Protein GrpE (197 aa).

The segment at Met1–Arg40 is disordered.

The protein belongs to the GrpE family. In terms of assembly, homodimer.

The protein resides in the cytoplasm. Functionally, participates actively in the response to hyperosmotic and heat shock by preventing the aggregation of stress-denatured proteins, in association with DnaK and GrpE. It is the nucleotide exchange factor for DnaK and may function as a thermosensor. Unfolded proteins bind initially to DnaJ; upon interaction with the DnaJ-bound protein, DnaK hydrolyzes its bound ATP, resulting in the formation of a stable complex. GrpE releases ADP from DnaK; ATP binding to DnaK triggers the release of the substrate protein, thus completing the reaction cycle. Several rounds of ATP-dependent interactions between DnaJ, DnaK and GrpE are required for fully efficient folding. The sequence is that of Protein GrpE from Escherichia coli (strain K12 / DH10B).